Consider the following 124-residue polypeptide: UPF0102 protein Noca_3248 (124 aa).

It belongs to the UPF0102 family.

This is UPF0102 protein Noca_3248 from Nocardioides sp. (strain ATCC BAA-499 / JS614).